A 248-amino-acid polypeptide reads, in one-letter code: Granulin (248 aa).

Belongs to the polyhedrin family.

Its function is as follows. Component of the virus occlusion bodies, which are large proteinaceous structures, that protect the virus from the outside environment for extended periods until they are ingested by insect larvae. This is Granulin from Cydia pomonella (Codling moth).